A 483-amino-acid polypeptide reads, in one-letter code: UDP-N-acetylmuramate--L-alanine ligase (483 aa).

112–118 (GTHGKTT) contributes to the ATP binding site.

Belongs to the MurCDEF family.

The protein localises to the cytoplasm. The enzyme catalyses UDP-N-acetyl-alpha-D-muramate + L-alanine + ATP = UDP-N-acetyl-alpha-D-muramoyl-L-alanine + ADP + phosphate + H(+). Its pathway is cell wall biogenesis; peptidoglycan biosynthesis. Functionally, cell wall formation. The polypeptide is UDP-N-acetylmuramate--L-alanine ligase (Ralstonia nicotianae (strain ATCC BAA-1114 / GMI1000) (Ralstonia solanacearum)).